The chain runs to 252 residues: tRNA pseudouridine synthase A (252 aa).

The active-site Nucleophile is the Asp52. Tyr111 is a binding site for substrate.

This sequence belongs to the tRNA pseudouridine synthase TruA family. As to quaternary structure, homodimer.

The catalysed reaction is uridine(38/39/40) in tRNA = pseudouridine(38/39/40) in tRNA. Formation of pseudouridine at positions 38, 39 and 40 in the anticodon stem and loop of transfer RNAs. This is tRNA pseudouridine synthase A from Parabacteroides distasonis (strain ATCC 8503 / DSM 20701 / CIP 104284 / JCM 5825 / NCTC 11152).